The primary structure comprises 406 residues: Succinylornithine transaminase (406 aa).

K252 is subject to N6-(pyridoxal phosphate)lysine.

It belongs to the class-III pyridoxal-phosphate-dependent aminotransferase family. AstC subfamily. Requires pyridoxal 5'-phosphate as cofactor.

The catalysed reaction is N(2)-succinyl-L-ornithine + 2-oxoglutarate = N-succinyl-L-glutamate 5-semialdehyde + L-glutamate. It functions in the pathway amino-acid degradation; L-arginine degradation via AST pathway; L-glutamate and succinate from L-arginine: step 3/5. Catalyzes the transamination of N(2)-succinylornithine and alpha-ketoglutarate into N(2)-succinylglutamate semialdehyde and glutamate. Can also act as an acetylornithine aminotransferase. This Escherichia coli O7:K1 (strain IAI39 / ExPEC) protein is Succinylornithine transaminase.